Reading from the N-terminus, the 283-residue chain is ATP phosphoribosyltransferase (283 aa).

The protein belongs to the ATP phosphoribosyltransferase family. Long subfamily. Mg(2+) is required as a cofactor.

The protein resides in the cytoplasm. The enzyme catalyses 1-(5-phospho-beta-D-ribosyl)-ATP + diphosphate = 5-phospho-alpha-D-ribose 1-diphosphate + ATP. The protein operates within amino-acid biosynthesis; L-histidine biosynthesis; L-histidine from 5-phospho-alpha-D-ribose 1-diphosphate: step 1/9. With respect to regulation, feedback inhibited by histidine. In terms of biological role, catalyzes the condensation of ATP and 5-phosphoribose 1-diphosphate to form N'-(5'-phosphoribosyl)-ATP (PR-ATP). Has a crucial role in the pathway because the rate of histidine biosynthesis seems to be controlled primarily by regulation of HisG enzymatic activity. The polypeptide is ATP phosphoribosyltransferase (Bifidobacterium longum subsp. infantis (strain ATCC 15697 / DSM 20088 / JCM 1222 / NCTC 11817 / S12)).